The primary structure comprises 276 residues: Undecaprenyl-diphosphatase (276 aa).

The next 8 membrane-spanning stretches (helical) occupy residues 1–21 (MSWL…FLPV), 39–59 (AGAS…LIYF), 84–104 (YRLG…GLLF), 115–135 (LWLV…AEYY), 159–179 (LALM…LFLG), 188–208 (FGFL…LPDA), 222–242 (QLIV…AWFL), and 253–273 (FVGY…TGVL).

The protein belongs to the UppP family.

It localises to the cell membrane. The catalysed reaction is di-trans,octa-cis-undecaprenyl diphosphate + H2O = di-trans,octa-cis-undecaprenyl phosphate + phosphate + H(+). Its function is as follows. Catalyzes the dephosphorylation of undecaprenyl diphosphate (UPP). Confers resistance to bacitracin. The sequence is that of Undecaprenyl-diphosphatase from Mycolicibacterium smegmatis (strain ATCC 700084 / mc(2)155) (Mycobacterium smegmatis).